A 314-amino-acid chain; its full sequence is MNQTFVKSVTEQLPQLGLLQDEPMKKHTTFRIGGPADYYAEPDMSRISKLIEMAKACDMPVTVIGNGSNLLVGDKGIRGLVIGIGKGLSEIEVTEAVAQDFTAQDNCHIITAGAGAILAAVAAKAAEASLSGLEFASGIPGSVGGAVVMNAGAYGGEIKDVLIDATVLTADGELKTVTRDELDLSYRHSIVPEKGYIVLSARFRLTPKPKDEIKSYMAELRAKRVEKQPLEYPSAGSTFKRPEGYFAGKLIMDAGLRGYSVGDAQVSEKHCGFVVNKGEAAAADVLTLIKDVQETVLKQFGVKLEPEVKMIGEF.

The FAD-binding PCMH-type domain occupies Arg-31–Lys-208. Arg-187 is an active-site residue. Catalysis depends on Ser-237, which acts as the Proton donor. Residue Glu-307 is part of the active site.

Belongs to the MurB family. Requires FAD as cofactor.

Its subcellular location is the cytoplasm. The enzyme catalyses UDP-N-acetyl-alpha-D-muramate + NADP(+) = UDP-N-acetyl-3-O-(1-carboxyvinyl)-alpha-D-glucosamine + NADPH + H(+). It participates in cell wall biogenesis; peptidoglycan biosynthesis. Functionally, cell wall formation. This Agathobacter rectalis (strain ATCC 33656 / DSM 3377 / JCM 17463 / KCTC 5835 / VPI 0990) (Eubacterium rectale) protein is UDP-N-acetylenolpyruvoylglucosamine reductase.